The primary structure comprises 148 residues: Small ribosomal subunit protein uS7m (148 aa).

This sequence belongs to the universal ribosomal protein uS7 family. Part of the small ribosomal subunit.

It is found in the mitochondrion. Its function is as follows. One of the primary rRNA binding proteins, it binds directly to 18S rRNA where it nucleates assembly of the head domain of the small subunit. In Arabidopsis thaliana (Mouse-ear cress), this protein is Small ribosomal subunit protein uS7m (RPS7).